Reading from the N-terminus, the 329-residue chain is Beta-ketoacyl-[acyl-carrier-protein] synthase III (329 aa).

Active-site residues include Cys123 and His256. Positions 257-261 are ACP-binding; the sequence is QANIR. Asn286 is a catalytic residue.

Belongs to the thiolase-like superfamily. FabH family. In terms of assembly, homodimer.

Its subcellular location is the cytoplasm. The enzyme catalyses malonyl-[ACP] + acetyl-CoA + H(+) = 3-oxobutanoyl-[ACP] + CO2 + CoA. Its pathway is lipid metabolism; fatty acid biosynthesis. Catalyzes the condensation reaction of fatty acid synthesis by the addition to an acyl acceptor of two carbons from malonyl-ACP. Catalyzes the first condensation reaction which initiates fatty acid synthesis and may therefore play a role in governing the total rate of fatty acid production. Possesses both acetoacetyl-ACP synthase and acetyl transacylase activities. Its substrate specificity determines the biosynthesis of branched-chain and/or straight-chain of fatty acids. This chain is Beta-ketoacyl-[acyl-carrier-protein] synthase III, found in Burkholderia pseudomallei (strain 1710b).